Reading from the N-terminus, the 608-residue chain is UvrABC system protein C (608 aa).

One can recognise a GIY-YIG domain in the interval 13–91; the sequence is HDPGVYRMFD…IKTFQPRYNV (79 aa). One can recognise a UVR domain in the interval 201 to 236; that stretch reads QQVLDHLIAKMETASRALDFENAARFRDQIQAVRAV.

This sequence belongs to the UvrC family. Interacts with UvrB in an incision complex.

Its subcellular location is the cytoplasm. Functionally, the UvrABC repair system catalyzes the recognition and processing of DNA lesions. UvrC both incises the 5' and 3' sides of the lesion. The N-terminal half is responsible for the 3' incision and the C-terminal half is responsible for the 5' incision. The polypeptide is UvrABC system protein C (Actinobacillus succinogenes (strain ATCC 55618 / DSM 22257 / CCUG 43843 / 130Z)).